Here is a 421-residue protein sequence, read N- to C-terminus: Serine hydroxymethyltransferase (421 aa).

Residues leucine 118 and 122–124 (GHL) contribute to the (6S)-5,6,7,8-tetrahydrofolate site. At lysine 226 the chain carries N6-(pyridoxal phosphate)lysine. Glutamate 242 contacts (6S)-5,6,7,8-tetrahydrofolate.

Belongs to the SHMT family. In terms of assembly, homodimer. The cofactor is pyridoxal 5'-phosphate.

The protein resides in the cytoplasm. It carries out the reaction (6R)-5,10-methylene-5,6,7,8-tetrahydrofolate + glycine + H2O = (6S)-5,6,7,8-tetrahydrofolate + L-serine. Its pathway is one-carbon metabolism; tetrahydrofolate interconversion. It functions in the pathway amino-acid biosynthesis; glycine biosynthesis; glycine from L-serine: step 1/1. Its function is as follows. Catalyzes the reversible interconversion of serine and glycine with tetrahydrofolate (THF) serving as the one-carbon carrier. This reaction serves as the major source of one-carbon groups required for the biosynthesis of purines, thymidylate, methionine, and other important biomolecules. Also exhibits THF-independent aldolase activity toward beta-hydroxyamino acids, producing glycine and aldehydes, via a retro-aldol mechanism. The sequence is that of Serine hydroxymethyltransferase from Mycoplasmopsis synoviae (strain 53) (Mycoplasma synoviae).